The sequence spans 349 residues: Holliday junction branch migration complex subunit RuvB (349 aa).

The large ATPase domain (RuvB-L) stretch occupies residues 1-185; that stretch reads MSQEKERLIS…FGSIFRLDFY (185 aa). Residues leucine 24, arginine 25, glycine 66, lysine 69, threonine 70, threonine 71, 132-134, arginine 175, tyrosine 185, and arginine 222 each bind ATP; that span reads EDY. Threonine 70 is a Mg(2+) binding site. The segment at 186–256 is small ATPAse domain (RuvB-S); the sequence is DEEAIHDIVR…IAAESLACLE (71 aa). The tract at residues 259 to 349 is head domain (RuvB-H); that stretch reads KLGLDEIDHK…QQGLWTENGS (91 aa). DNA is bound by residues arginine 314 and arginine 319.

Belongs to the RuvB family. Homohexamer. Forms an RuvA(8)-RuvB(12)-Holliday junction (HJ) complex. HJ DNA is sandwiched between 2 RuvA tetramers; dsDNA enters through RuvA and exits via RuvB. An RuvB hexamer assembles on each DNA strand where it exits the tetramer. Each RuvB hexamer is contacted by two RuvA subunits (via domain III) on 2 adjacent RuvB subunits; this complex drives branch migration. In the full resolvosome a probable DNA-RuvA(4)-RuvB(12)-RuvC(2) complex forms which resolves the HJ.

The protein resides in the cytoplasm. It carries out the reaction ATP + H2O = ADP + phosphate + H(+). The RuvA-RuvB-RuvC complex processes Holliday junction (HJ) DNA during genetic recombination and DNA repair, while the RuvA-RuvB complex plays an important role in the rescue of blocked DNA replication forks via replication fork reversal (RFR). RuvA specifically binds to HJ cruciform DNA, conferring on it an open structure. The RuvB hexamer acts as an ATP-dependent pump, pulling dsDNA into and through the RuvAB complex. RuvB forms 2 homohexamers on either side of HJ DNA bound by 1 or 2 RuvA tetramers; 4 subunits per hexamer contact DNA at a time. Coordinated motions by a converter formed by DNA-disengaged RuvB subunits stimulates ATP hydrolysis and nucleotide exchange. Immobilization of the converter enables RuvB to convert the ATP-contained energy into a lever motion, pulling 2 nucleotides of DNA out of the RuvA tetramer per ATP hydrolyzed, thus driving DNA branch migration. The RuvB motors rotate together with the DNA substrate, which together with the progressing nucleotide cycle form the mechanistic basis for DNA recombination by continuous HJ branch migration. Branch migration allows RuvC to scan DNA until it finds its consensus sequence, where it cleaves and resolves cruciform DNA. The chain is Holliday junction branch migration complex subunit RuvB from Dehalococcoides mccartyi (strain CBDB1).